Consider the following 470-residue polypeptide: Regulator of microtubule dynamics protein 3 (470 aa).

Over 1–12 (MSRLGALGGSRA) the chain is Mitochondrial intermembrane. A helical transmembrane segment spans residues 13–35 (GLGLLLGTAAGLGFLCVLYSQRW). The Cytoplasmic segment spans residues 36–470 (KRTQRHGRSH…DLEELEVILG (435 aa)). Residues S44, S46, S50, and S57 each carry the phosphoserine modification. The stretch at 91-125 (LDRLDFVLTSLMALRREVEELQRSLQGLAGEIVGE) forms a coiled coil. The short motif at 157 to 163 (VYFTASS) is the FFAT element. The residue at position 160 (T160) is a Phosphothreonine. The interval 168–205 (TDAESEGGYTTANAESDYERDSDKESGDAEDEVSCETV) is disordered. 4 positions are modified to phosphoserine: S183, S193, S212, and S233. The segment covering 184-194 (DYERDSDKESG) has biased composition (basic and acidic residues).

Belongs to the RMDN family. Interacts with PTPN2. Interacts with microtubules. Interacts with VAPB. Interacts (via FFAT motif) with MOSPD2 (via MSP domain). Interacts (via phosphorylated FFAT motif) with MOSPD2, VAPA and VAPB. In terms of processing, phosphorylation at Thr-160 of the FFAT motif activates interaction with MOSPD2, VAPA and VAPB.

The protein resides in the mitochondrion outer membrane. It is found in the cytoplasm. It localises to the nucleus. The protein localises to the cytoskeleton. Its subcellular location is the spindle. The protein resides in the spindle pole. In terms of biological role, involved in cellular calcium homeostasis regulation. May participate in differentiation and apoptosis of keratinocytes. Overexpression induces apoptosis. The sequence is that of Regulator of microtubule dynamics protein 3 from Mus musculus (Mouse).